A 3106-amino-acid chain; its full sequence is Probable polyketide synthase 29 (3106 aa).

A compositionally biased stretch (polar residues) spans 1–11 (MVQNTDNTRNS). The disordered stretch occupies residues 1-20 (MVQNTDNTRNSKLIRDRNDY). One can recognise a Ketosynthase family 3 (KS3) domain in the interval 28–461 (SGDIAVIGIG…GSNVCLILSE (434 aa)). Residues Cys200, His339, and His384 each act as for beta-ketoacyl synthase activity in the active site. Residues 661 to 694 (GVSADIIIGHSLGEVSSPYCSGMIDFQTLCYLTY) form an acyl/malonyl transferase region. Ser671 serves as the catalytic For acyl/malonyl transferase activity. Positions 961 to 1082 (PSIHGLGNNT…GNFSLTKHNS (122 aa)) are N-terminal hotdog fold. The PKS/mFAS DH domain maps to 961-1266 (PSIHGLGNNT…CALVSLDSNP (306 aa)). The Proton acceptor; for dehydratase activity role is filled by His994. Residues 1099-1266 (NFTSISKQDF…CALVSLDSNP (168 aa)) are C-terminal hotdog fold. Asp1171 functions as the Proton donor; for dehydratase activity in the catalytic mechanism. The Carrier domain maps to 2533–2610 (NNNEIIRSTI…QSIEIILSAH (78 aa)). At Ser2570 the chain carries O-(pantetheine 4'-phosphoryl)serine. The stretch at 2609-2656 (AHNNNNKNNNNNNNINNNNKNNNNNNNKNNNNINNNINNNKNNNNNNN) forms a coiled coil. The tract at residues 2614-2656 (NKNNNNNNNINNNNKNNNNNNNKNNNNINNNINNNKNNNNNNN) is disordered.

The cofactor is pantetheine 4'-phosphate.

Its function is as follows. Probable polyketide synthase. The protein is Probable polyketide synthase 29 (pks29) of Dictyostelium discoideum (Social amoeba).